A 337-amino-acid polypeptide reads, in one-letter code: Ketol-acid reductoisomerase (NADP(+)) (337 aa).

The KARI N-terminal Rossmann domain maps to 3-183 (IELLYDADAD…GGARAGVIPT (181 aa)). NADP(+) is bound by residues 26 to 29 (YGSQ), Arg49, Ser52, Ser54, and 84 to 87 (DTSQ). The active site involves His109. Residue Gly135 participates in NADP(+) binding. Positions 184-329 (TFREETETDL…SKLRDLMSWV (146 aa)) constitute a KARI C-terminal knotted domain. Mg(2+)-binding residues include Asp192, Glu196, Glu228, and Glu232. Ser253 is a binding site for substrate.

This sequence belongs to the ketol-acid reductoisomerase family. Requires Mg(2+) as cofactor.

The enzyme catalyses (2R)-2,3-dihydroxy-3-methylbutanoate + NADP(+) = (2S)-2-acetolactate + NADPH + H(+). It catalyses the reaction (2R,3R)-2,3-dihydroxy-3-methylpentanoate + NADP(+) = (S)-2-ethyl-2-hydroxy-3-oxobutanoate + NADPH + H(+). It participates in amino-acid biosynthesis; L-isoleucine biosynthesis; L-isoleucine from 2-oxobutanoate: step 2/4. Its pathway is amino-acid biosynthesis; L-valine biosynthesis; L-valine from pyruvate: step 2/4. Involved in the biosynthesis of branched-chain amino acids (BCAA). Catalyzes an alkyl-migration followed by a ketol-acid reduction of (S)-2-acetolactate (S2AL) to yield (R)-2,3-dihydroxy-isovalerate. In the isomerase reaction, S2AL is rearranged via a Mg-dependent methyl migration to produce 3-hydroxy-3-methyl-2-ketobutyrate (HMKB). In the reductase reaction, this 2-ketoacid undergoes a metal-dependent reduction by NADPH to yield (R)-2,3-dihydroxy-isovalerate. This Corynebacterium diphtheriae (strain ATCC 700971 / NCTC 13129 / Biotype gravis) protein is Ketol-acid reductoisomerase (NADP(+)).